The following is an 85-amino-acid chain: UPF0335 protein Plav_2034 (85 aa).

Belongs to the UPF0335 family.

In Parvibaculum lavamentivorans (strain DS-1 / DSM 13023 / NCIMB 13966), this protein is UPF0335 protein Plav_2034.